Consider the following 728-residue polypeptide: 1,4-alpha-glucan branching enzyme GlgB (728 aa).

Catalysis depends on aspartate 405, which acts as the Nucleophile. The active-site Proton donor is the glutamate 458.

Belongs to the glycosyl hydrolase 13 family. GlgB subfamily. In terms of assembly, monomer.

The enzyme catalyses Transfers a segment of a (1-&gt;4)-alpha-D-glucan chain to a primary hydroxy group in a similar glucan chain.. It functions in the pathway glycan biosynthesis; glycogen biosynthesis. Catalyzes the formation of the alpha-1,6-glucosidic linkages in glycogen by scission of a 1,4-alpha-linked oligosaccharide from growing alpha-1,4-glucan chains and the subsequent attachment of the oligosaccharide to the alpha-1,6 position. This is 1,4-alpha-glucan branching enzyme GlgB from Salmonella arizonae (strain ATCC BAA-731 / CDC346-86 / RSK2980).